Consider the following 1599-residue polypeptide: Protein TOPAZ1 (1599 aa).

4 disordered regions span residues 1-42 (MVAQ…KESL), 159-185 (GCMH…TDPS), 802-836 (PNVA…VPDP), and 867-889 (VTHE…SSDL). 2 stretches are compositionally biased toward basic and acidic residues: residues 168-183 (SKSK…DKTD) and 805-832 (AEEH…RELP). Polar residues predominate over residues 874-884 (NEKPGGLSEQT).

As to expression, expressed in both adult testis and fetal ovary, mostly in germ cells (at protein level).

Its subcellular location is the cytoplasm. It localises to the cytosol. Important for normal spermatogenesis and male fertility. Specifically required for progression to the post-meiotic stages of spermatocyte development. Seems to be necessary for normal expression levels of a number of testis-expressed gene transcripts, although its role in this process is unclear. The chain is Protein TOPAZ1 (TOPAZ1) from Ovis aries (Sheep).